Consider the following 572-residue polypeptide: Adenine deaminase (572 aa).

It belongs to the metallo-dependent hydrolases superfamily. Adenine deaminase family. It depends on Mn(2+) as a cofactor.

It carries out the reaction adenine + H2O + H(+) = hypoxanthine + NH4(+). The polypeptide is Adenine deaminase (Clostridium perfringens (strain 13 / Type A)).